The chain runs to 760 residues: Striatin-4 (760 aa).

The disordered stretch occupies residues 1–65; the sequence is MMEERAAAAV…PTAGPEPLSL (65 aa). The span at 7–35 shows a compositional bias: low complexity; sequence AAAVASAASSCRPLGSGTAPNPTAAAPAS. The segment covering 43-54 has biased composition (gly residues); the sequence is PVGKGGGGGGSP. A Phosphoserine modification is found at S53. The stretch at 69-136 forms a coiled coil; it reads LHFIQHEWAR…QERAKYHKLK (68 aa). Residues 71-79 are caveolin-binding; that stretch reads FIQHEWARF. A calmodulin-binding region spans residues 165–182; that stretch reads ENSPLVWKEGRQLLRQYL. S206, S223, and S276 each carry phosphoserine. Disordered regions lie at residues 210-233 and 272-346; these read NGAGEPVEGAPRASPGPGGLSGGE and EDED…PHEL. Acidic residues-rich tracts occupy residues 272 to 283 and 302 to 317; these read EDEDSDEDDELD and EMEDEDEEDDSEDAIN. Residues 332–346 show a composition bias toward basic and acidic residues; sequence PDPRRCTSEGNPHEL. 7 WD repeats span residues 443 to 482, 496 to 535, 549 to 588, 595 to 635, 642 to 681, 684 to 723, and 730 to 759; these read SHYDGIRSLAFHHSQSALLTASEDGTLKLWNLQKAVTAKK, AHRGPVLAVTMGSNSEYCYSGGADARIHSWKIPDLNMDPY, GHGDAVWGLAFSPTSQRLASCSADGTVRIWDPSSSGPSCL, GEHG…ALLT, SGPAQINQVVSHPSQPLTITAHDDRGIRFLDNRTGKSVHS, AHLDAVTCLAVDPNGVFLMSGSHDCSLRLWSLDNKTCVQE, and KHEEAIHAVACHPSKALIASAGADALAKVF.

The protein belongs to the WD repeat striatin family. In terms of assembly, part of the core of STRIPAK complexes composed of PP2A catalytic and scaffolding subunits, the striatins (PP2A regulatory subunits), the striatin-associated proteins MOB4, STRIP1 and STRIP2, PDCD10 and members of the STE20 kinases, such as STK24 and STK26. Interacts with CTTNBP2NL. Mainly expressed in brain but is also expressed at low levels in the kidney.

It is found in the cytoplasm. It localises to the membrane. Its subcellular location is the cell projection. The protein localises to the dendritic spine. Its function is as follows. Calmodulin-binding scaffolding protein which is the center of the striatin-interacting phosphatase and kinase (STRIPAK) complexes. STRIPAK complexes have critical roles in protein (de)phosphorylation and are regulators of multiple signaling pathways including Hippo, MAPK, nuclear receptor and cytoskeleton remodeling. Different types of STRIPAK complexes are involved in a variety of biological processes such as cell growth, differentiation, apoptosis, metabolism and immune regulation. Key regulator of the expanded Hippo signaling pathway by interacting and allowing the inhibition of MAP4K kinases by the STRIPAK complex. In Mus musculus (Mouse), this protein is Striatin-4 (Strn4).